The following is a 265-amino-acid chain: 3-methyl-2-oxobutanoate hydroxymethyltransferase (265 aa).

Mg(2+) contacts are provided by aspartate 45 and aspartate 84. 3-methyl-2-oxobutanoate contacts are provided by residues 45 to 46, aspartate 84, and lysine 112; that span reads DS. Glutamate 114 lines the Mg(2+) pocket. The active-site Proton acceptor is the glutamate 181.

This sequence belongs to the PanB family. As to quaternary structure, homodecamer; pentamer of dimers. Requires Mg(2+) as cofactor.

The protein localises to the cytoplasm. It catalyses the reaction 3-methyl-2-oxobutanoate + (6R)-5,10-methylene-5,6,7,8-tetrahydrofolate + H2O = 2-dehydropantoate + (6S)-5,6,7,8-tetrahydrofolate. It functions in the pathway cofactor biosynthesis; (R)-pantothenate biosynthesis; (R)-pantoate from 3-methyl-2-oxobutanoate: step 1/2. Catalyzes the reversible reaction in which hydroxymethyl group from 5,10-methylenetetrahydrofolate is transferred onto alpha-ketoisovalerate to form ketopantoate. This is 3-methyl-2-oxobutanoate hydroxymethyltransferase from Yersinia enterocolitica serotype O:8 / biotype 1B (strain NCTC 13174 / 8081).